The sequence spans 435 residues: GTPase Der (435 aa).

2 EngA-type G domains span residues 4–167 (GIVA…PSHE) and 175–350 (TRVS…TALD). Residues 10-17 (GRPNVGKS), 57-61 (DTGGI), 119-122 (NKYD), 181-188 (GRPNVGKS), 228-232 (DTAGI), and 293-296 (NKWD) each bind GTP. Residues 351–435 (KKIKTSVFNE…PMSIIFRERK (85 aa)) enclose the KH-like domain.

It belongs to the TRAFAC class TrmE-Era-EngA-EngB-Septin-like GTPase superfamily. EngA (Der) GTPase family. In terms of assembly, associates with the 50S ribosomal subunit.

In terms of biological role, GTPase that plays an essential role in the late steps of ribosome biogenesis. This is GTPase Der from Mesoplasma florum (strain ATCC 33453 / NBRC 100688 / NCTC 11704 / L1) (Acholeplasma florum).